The sequence spans 1772 residues: Putative stereocilin-like protein (1772 aa).

Residues 1–25 (MALSLWPLLLLLLLLLLLSFAVTLA) form the signal peptide. N65, N427, N476, and N565 each carry an N-linked (GlcNAc...) asparagine glycan.

The protein belongs to the stereocilin family.

It is found in the secreted. The protein is Putative stereocilin-like protein (STRCP1) of Homo sapiens (Human).